Reading from the N-terminus, the 763-residue chain is Phosphoglycerol transferase I (763 aa).

Helical transmembrane passes span 1-21 (MSEL…AWKA), 26-46 (WWFA…ITLF), 77-97 (ILPG…LGWI), and 108-128 (FGYS…SPAF).

Belongs to the OpgB family.

It localises to the cell inner membrane. The catalysed reaction is a phosphatidylglycerol + a membrane-derived-oligosaccharide D-glucose = a 1,2-diacyl-sn-glycerol + a membrane-derived-oligosaccharide 6-(glycerophospho)-D-glucose.. It participates in glycan metabolism; osmoregulated periplasmic glucan (OPG) biosynthesis. In terms of biological role, transfers a phosphoglycerol residue from phosphatidylglycerol to the membrane-bound nascent glucan backbones. The sequence is that of Phosphoglycerol transferase I from Escherichia coli O127:H6 (strain E2348/69 / EPEC).